The following is a 288-amino-acid chain: 4-hydroxybenzoate octaprenyltransferase (288 aa).

6 helical membrane-spanning segments follow: residues 20–40, 43–63, 96–116, 210–230, 234–254, and 262–282; these read IGTL…AGGL, LKVF…GCII, LFVV…PLVV, QIIG…GMVA, AIYA…QKLI, and CFTA…ALML.

The protein belongs to the UbiA prenyltransferase family. The cofactor is Mg(2+).

It localises to the cell inner membrane. It carries out the reaction all-trans-octaprenyl diphosphate + 4-hydroxybenzoate = 4-hydroxy-3-(all-trans-octaprenyl)benzoate + diphosphate. It participates in cofactor biosynthesis; ubiquinone biosynthesis. Its function is as follows. Catalyzes the prenylation of para-hydroxybenzoate (PHB) with an all-trans polyprenyl group. Mediates the second step in the final reaction sequence of ubiquinone-8 (UQ-8) biosynthesis, which is the condensation of the polyisoprenoid side chain with PHB, generating the first membrane-bound Q intermediate 3-octaprenyl-4-hydroxybenzoate. The chain is 4-hydroxybenzoate octaprenyltransferase from Shewanella pealeana (strain ATCC 700345 / ANG-SQ1).